Here is a 354-residue protein sequence, read N- to C-terminus: Photosystem II protein D1 3 (354 aa).

The next 3 helical transmembrane spans lie at 29 to 46 (YIGW…TATT), 118 to 133 (HFLI…EWEL), and 142 to 156 (WIAV…AATA). H118 is a binding site for chlorophyll a. Residue Y126 participates in pheophytin a binding. Positions 170 and 189 each coordinate [CaMn4O5] cluster. A helical transmembrane segment spans residues 197-218 (FHQLGVAGVFGGALFSAMHGSL). H198 provides a ligand contact to chlorophyll a. Residues H215 and 264–265 (SF) contribute to the a quinone site. H215 is a Fe cation binding site. A Fe cation-binding site is contributed by H272. A helical transmembrane segment spans residues 274–288 (FLAAWPVIGIWFTAL). The [CaMn4O5] cluster site is built by H332, E333, D342, and A344. Positions 345–354 (AVEVAPAVRG) are excised as a propeptide.

This sequence belongs to the reaction center PufL/M/PsbA/D family. As to quaternary structure, PSII is composed of 1 copy each of membrane proteins PsbA, PsbB, PsbC, PsbD, PsbE, PsbF, PsbH, PsbI, PsbJ, PsbK, PsbL, PsbM, PsbT, PsbX, PsbY, PsbZ, Psb30/Ycf12, peripheral proteins PsbO, CyanoQ (PsbQ), PsbU, PsbV and a large number of cofactors. It forms dimeric complexes. The D1/D2 heterodimer binds P680, chlorophylls that are the primary electron donor of PSII, and subsequent electron acceptors. It shares a non-heme iron and each subunit binds pheophytin, quinone, additional chlorophylls, carotenoids and lipids. D1 provides most of the ligands for the Mn4-Ca-O5 cluster of the oxygen-evolving complex (OEC). There is also a Cl(-1) ion associated with D1 and D2, which is required for oxygen evolution. The PSII complex binds additional chlorophylls, carotenoids and specific lipids. serves as cofactor. Tyr-161 forms a radical intermediate that is referred to as redox-active TyrZ, YZ or Y-Z. Post-translationally, C-terminally processed by CtpA; processing is essential to allow assembly of the oxygen-evolving complex and thus photosynthetic growth.

The protein resides in the cellular thylakoid membrane. It carries out the reaction 2 a plastoquinone + 4 hnu + 2 H2O = 2 a plastoquinol + O2. Its function is as follows. Photosystem II (PSII) is a light-driven water:plastoquinone oxidoreductase that uses light energy to abstract electrons from H(2)O, generating O(2) and a proton gradient subsequently used for ATP formation. It consists of a core antenna complex that captures photons, and an electron transfer chain that converts photonic excitation into a charge separation. The D1/D2 (PsbA/PsbD) reaction center heterodimer binds P680, the primary electron donor of PSII as well as several subsequent electron acceptors. This chain is Photosystem II protein D1 3, found in Synechococcus sp. (strain JA-3-3Ab) (Cyanobacteria bacterium Yellowstone A-Prime).